Here is a 123-residue protein sequence, read N- to C-terminus: Large ribosomal subunit protein uL14 (123 aa).

It belongs to the universal ribosomal protein uL14 family. As to quaternary structure, part of the 50S ribosomal subunit. Forms a cluster with proteins L3 and L19. In the 70S ribosome, L14 and L19 interact and together make contacts with the 16S rRNA in bridges B5 and B8.

Functionally, binds to 23S rRNA. Forms part of two intersubunit bridges in the 70S ribosome. The protein is Large ribosomal subunit protein uL14 of Blochmanniella floridana.